The following is a 427-amino-acid chain: Vitamin D3 receptor (427 aa).

The segment at residues 21-96 (PRICGVCGDR…IGMMKEFILT (76 aa)) is a DNA-binding region (nuclear receptor). 8 residues coordinate Zn(2+): Cys24, Cys27, Cys41, Cys44, Cys60, Cys66, Cys76, and Cys79. 2 consecutive NR C4-type zinc fingers follow at residues 24 to 44 (CGVC…CEGC) and 60 to 79 (CPFN…CQAC). Positions 97-126 (DEEVQRKREMILKRKEEEALKDSLRPKLSE) are hinge. The region spanning 127–423 (EQQRIIAILL…LTPLVLEVFG (297 aa)) is the NR LBD domain. Tyr143 provides a ligand contact to calcitriol. Residues 149–201 (DFGQFRPPVRGDEEEGTLPSRSSSAHAPSFSGSSSSSCSDQYTSSPDTMEPAS) are disordered. The segment covering 168-193 (SRSSSAHAPSFSGSSSSSCSDQYTSS) has biased composition (low complexity). Calcitriol is bound at residue Ser237. The segment at 246–264 (KMIPGFRDLTAEDQIVLLK) is interaction with coactivator LXXLL motif. The calcitriol site is built by Arg274, Ser278, His305, and His397. Positions 416 to 424 (PLVLEVFGN) match the 9aaTAD motif.

This sequence belongs to the nuclear hormone receptor family. NR1 subfamily. Homodimer in the absence of bound vitamin D3. Heterodimer with RXRA after vitamin D3 binding. Interacts with MED1, NCOA1, NCOA2, NCOA3 and NCOA6 coactivators, leading to a strong increase of transcription of target genes. Interacts with the corepressor NCOR1. Interacts with SNW1. Interacts with IRX4, the interaction does not affect its transactivation activity. Interacts with CRY1. Interacts with CRY2 in a ligand-dependent manner. Post-translationally, ubiquitinated by UBR5, leading to its degradation: UBR5 specifically recognizes and binds ligand-bound VDR when it is not associated with coactivators (NCOAs). In presence of NCOAs, the UBR5-degron is not accessible, preventing its ubiquitination and degradation.

The protein localises to the nucleus. It localises to the cytoplasm. Its function is as follows. Nuclear receptor for calcitriol, the active form of vitamin D3 which mediates the action of this vitamin on cells. Enters the nucleus upon vitamin D3 binding where it forms heterodimers with the retinoid X receptor/RXR. The VDR-RXR heterodimers bind to specific response elements on DNA and activate the transcription of vitamin D3-responsive target genes. Plays a central role in calcium homeostasis. Also functions as a receptor for the secondary bile acid lithocholic acid (LCA) and its metabolites. This chain is Vitamin D3 receptor (VDR), found in Sus scrofa (Pig).